The following is an 814-amino-acid chain: MTDDRDKTNEDPEKIIEADFNPEDPDDADIAEDAKEGLVVATDVLPSTLPIIPLRPRPAFPGILTPMVFTGEKHVALAKRAVDTPSKMMGLVLAKEVDEPDSLENLHRFGVVGRVMKVLHTDDDSIHLLVNCLERFSIRELTESEEGLFARVDYHYATELSVNPELKAYSMAIITTLKELVQINPLYSEEIKMFLNRQSMDDPGRLTDFAANLTSGDGQLLQEILETIDVRNRIDKVLVLLKKELEVSRLQTKISKQIEQKVSAQQREFFLREQLKAIKKELGLEKEGKVSEIEKYQKRLKNLTLSEEAQKTIDEEIEKLRLIEPSSPEYNVSRNYLDWLTILPWGKFSKDNYNIERARRVLDRDHYGLKDVKDRILEFIAVGMLKGDISGSILCLVGPPGVGKTSIGKSIAAALNRTFYRFSLGGMRDEAEIKGHRRTYIGAMPGRFIQAMKSAGTANPVLMLDEIDKVGASFQGDPASALLEVLDPEQNSSFRDHYLDVPFDLSNVLFVATANQLDTIPAPLLDRMEIIRLAGYILEEKLEIARRYLIPKALENHGLKKGQVTIRKDALRAIIDGYAREAGVRNLENRIKKIMRHAAMEFSQGRTDKITVSKKDVAAILGKPIFTEEEVFEDVPGVVTGLAWTSMGGATLQIEATAMPSRNKGFKQTGQLGKVMVESSDIAYSYVMAHLEEYGADPEFFDKHFVHLHVPAGATPKDGPSAGVTMATALLSMITGKPVIKKLGMTGELTLTGKVLPIGGVKEKIIAVKRIGLTTVILPEANRKDFEELPDHLRENLSVHFAGDYRDVYQVAFG.

Residues 1–17 (MTDDRDKTNEDPEKIIE) show a composition bias toward basic and acidic residues. Positions 1 to 28 (MTDDRDKTNEDPEKIIEADFNPEDPDDA) are disordered. Residues 49-245 (LPIIPLRPRP…KVLVLLKKEL (197 aa)) enclose the Lon N-terminal domain. Residue 398–405 (GPPGVGKT) coordinates ATP. Residues 633–814 (EDVPGVVTGL…YRDVYQVAFG (182 aa)) enclose the Lon proteolytic domain. Residues Ser-721 and Lys-764 contribute to the active site.

This sequence belongs to the peptidase S16 family. As to quaternary structure, homohexamer. Organized in a ring with a central cavity.

Its subcellular location is the cytoplasm. The enzyme catalyses Hydrolysis of proteins in presence of ATP.. Functionally, ATP-dependent serine protease that mediates the selective degradation of mutant and abnormal proteins as well as certain short-lived regulatory proteins. Required for cellular homeostasis and for survival from DNA damage and developmental changes induced by stress. Degrades polypeptides processively to yield small peptide fragments that are 5 to 10 amino acids long. Binds to DNA in a double-stranded, site-specific manner. The chain is Lon protease 1 from Syntrophotalea carbinolica (strain DSM 2380 / NBRC 103641 / GraBd1) (Pelobacter carbinolicus).